The chain runs to 398 residues: Cystathionine gamma-lyase (398 aa).

Ser50 is modified (phosphoserine). Arg61, Tyr113, and Arg118 together coordinate substrate. Lys211 is subject to N6-(pyridoxal phosphate)lysine. Substrate is bound at residue Glu338.

This sequence belongs to the trans-sulfuration enzymes family. Homotetramer. Interacts with CALM in a calcium-dependent manner. Requires pyridoxal 5'-phosphate as cofactor.

It is found in the cytoplasm. The catalysed reaction is L,L-cystathionine + H2O = 2-oxobutanoate + L-cysteine + NH4(+). It catalyses the reaction L-homoserine = 2-oxobutanoate + NH4(+). The enzyme catalyses L-selenocystathionine + H2O = L-selenocysteine + 2-oxobutanoate + NH4(+). It carries out the reaction L-cysteine + H2O = hydrogen sulfide + pyruvate + NH4(+) + H(+). The catalysed reaction is L-homocysteine + H2O = 2-oxobutanoate + hydrogen sulfide + NH4(+) + H(+). It participates in amino-acid biosynthesis; L-cysteine biosynthesis; L-cysteine from L-homocysteine and L-serine: step 2/2. Its function is as follows. Catalyzes the last step in the trans-sulfuration pathway from L-methionine to L-cysteine in a pyridoxal-5'-phosphate (PLP)-dependent manner, which consists on cleaving the L,L-cystathionine molecule into L-cysteine, ammonia and 2-oxobutanoate. Part of the L-cysteine derived from the trans-sulfuration pathway is utilized for biosynthesis of the ubiquitous antioxidant glutathione. Besides its role in the conversion of L-cystathionine into L-cysteine, it utilizes L-cysteine and L-homocysteine as substrates (at much lower rates than L,L-cystathionine) to produce hydrogen sulfide (H2S). In vitro, it converts two L-cysteine molecules into lanthionine and H2S, and two L-homocysteine molecules to homolanthionine and H2S, which can be particularly relevant under conditions of severe hyperhomocysteinemia. Lanthionine and homolanthionine are structural homologs of L,L-cystathionine that differ by the absence or presence of an extra methylene group, respectively. Acts as a cysteine-protein sulfhydrase by mediating sulfhydration of target proteins: sulfhydration consists of converting -SH groups into -SSH on specific cysteine residues of target proteins such as GAPDH, PTPN1 and NF-kappa-B subunit RELA, thereby regulating their function. By generating the gasotransmitter H2S, it participates in a number of physiological processes such as vasodilation, bone protection, and inflammation. Plays an essential role in myogenesis by contributing to the biogenesis of H2S in skeletal muscle tissue. Can also accept homoserine as substrate. Catalyzes the elimination of selenocystathionine (which can be derived from the diet) to yield selenocysteine, ammonia and 2-oxobutanoate. The protein is Cystathionine gamma-lyase (Cth) of Rattus norvegicus (Rat).